The primary structure comprises 469 residues: Cysteine protease ATG4D (469 aa).

Positions 1–29 (MNSVSPLATQYGSPKGSQQMENRSTQSGG) are enriched in polar residues. Residues 1–41 (MNSVSPLATQYGSPKGSQQMENRSTQSGGHEQRKMGHQDAT) form a disordered region. C131 acts as the Nucleophile in catalysis. The disordered stretch occupies residues 169-191 (IRSSSPPSMPLSSLATGHSAGDY). A compositionally biased stretch (low complexity) spans 171-182 (SSSPPSMPLSSL). Catalysis depends on residues D356 and H358. Residues 436–469 (QEYAEGPQSSSHPPVCRKKGPLVKRPSSDEFEFL) form a disordered region.

This sequence belongs to the peptidase C54 family.

Its subcellular location is the cytoplasm. It carries out the reaction [protein]-C-terminal L-amino acid-glycyl-phosphatidylethanolamide + H2O = [protein]-C-terminal L-amino acid-glycine + a 1,2-diacyl-sn-glycero-3-phosphoethanolamine. The catalysed reaction is [protein]-C-terminal L-amino acid-glycyl-phosphatidylserine + H2O = [protein]-C-terminal L-amino acid-glycine + a 1,2-diacyl-sn-glycero-3-phospho-L-serine. Functionally, cysteine protease that plays a key role in autophagy by mediating both proteolytic activation and delipidation of ATG8 family proteins. The protease activity is required for proteolytic activation of ATG8 family proteins to reveal a C-terminal glycine. Exposure of the glycine at the C-terminus is essential for ATG8 proteins conjugation to phosphatidylethanolamine (PE) and insertion to membranes, which is necessary for autophagy. In addition to the protease activity, also mediates delipidation of ATG8 family proteins. Catalyzes delipidation of PE-conjugated forms of ATG8 proteins during macroautophagy. Also involved in non-canonical autophagy, a parallel pathway involving conjugation of ATG8 proteins to single membranes at endolysosomal compartments, by catalyzing delipidation of ATG8 proteins conjugated to phosphatidylserine (PS). This is Cysteine protease ATG4D from Xenopus laevis (African clawed frog).